A 296-amino-acid polypeptide reads, in one-letter code: Polyamine aminopropyltransferase (296 aa).

The PABS domain occupies 16 to 251 (HLWYFEYYTG…GMWSYTFASK (236 aa)). Gln46 serves as a coordination point for S-methyl-5'-thioadenosine. 2 residues coordinate spermidine: His77 and Asp101. S-methyl-5'-thioadenosine contacts are provided by residues Glu121 and 152–153 (NG). Asp170 acts as the Proton acceptor in catalysis. 170–173 (DSTD) lines the spermidine pocket.

The protein belongs to the spermidine/spermine synthase family. Homodimer or homotetramer.

The protein localises to the cytoplasm. The enzyme catalyses S-adenosyl 3-(methylsulfanyl)propylamine + putrescine = S-methyl-5'-thioadenosine + spermidine + H(+). It functions in the pathway amine and polyamine biosynthesis; spermidine biosynthesis; spermidine from putrescine: step 1/1. Catalyzes the irreversible transfer of a propylamine group from the amino donor S-adenosylmethioninamine (decarboxy-AdoMet) to putrescine (1,4-diaminobutane) to yield spermidine. The chain is Polyamine aminopropyltransferase from Thermotoga neapolitana (strain ATCC 49049 / DSM 4359 / NBRC 107923 / NS-E).